We begin with the raw amino-acid sequence, 1390 residues long: DNA-directed RNA polymerase subunit beta (1390 aa).

This sequence belongs to the RNA polymerase beta chain family. As to quaternary structure, the RNAP catalytic core consists of 2 alpha, 1 beta, 1 beta' and 1 omega subunit. When a sigma factor is associated with the core the holoenzyme is formed, which can initiate transcription.

It carries out the reaction RNA(n) + a ribonucleoside 5'-triphosphate = RNA(n+1) + diphosphate. Its function is as follows. DNA-dependent RNA polymerase catalyzes the transcription of DNA into RNA using the four ribonucleoside triphosphates as substrates. This is DNA-directed RNA polymerase subunit beta from Gluconobacter oxydans (strain 621H) (Gluconobacter suboxydans).